We begin with the raw amino-acid sequence, 239 residues long: Serine protease SplF (239 aa).

Residues 1-36 (MNKNIIIKSIAALTILTSITGVGTTMVEGIQQTAKA) form the signal peptide. Catalysis depends on charge relay system residues histidine 75, aspartate 114, and serine 192.

Belongs to the peptidase S1B family.

It is found in the secreted. This is Serine protease SplF (splF) from Staphylococcus aureus (strain NCTC 8325 / PS 47).